Reading from the N-terminus, the 774-residue chain is Protein translocase subunit SecA (774 aa).

Residues Gln66, 84–88 (GEGKS), and Asp474 contribute to the ATP site.

Belongs to the SecA family.

The protein resides in the plastid. It is found in the chloroplast stroma. The protein localises to the chloroplast thylakoid membrane. The catalysed reaction is ATP + H2O + cellular proteinSide 1 = ADP + phosphate + cellular proteinSide 2.. Its function is as follows. Has a central role in coupling the hydrolysis of ATP to the transfer of proteins across the thylakoid membrane. This is Protein translocase subunit SecA from Cyanidioschyzon merolae (strain NIES-3377 / 10D) (Unicellular red alga).